Here is a 66-residue protein sequence, read N- to C-terminus: Large ribosomal subunit protein bL35 (66 aa).

A compositionally biased stretch (basic residues) spans 1–26 (MPKMKTHRGGAKRVKRTGSGKLKRSR). 2 disordered regions span residues 1–28 (MPKM…SRAY) and 36–55 (KSTK…KGDQ).

It belongs to the bacterial ribosomal protein bL35 family.

The polypeptide is Large ribosomal subunit protein bL35 (Macrococcus caseolyticus (strain JCSC5402) (Macrococcoides caseolyticum)).